The chain runs to 2640 residues: Collagen alpha-5(VI) chain (2640 aa).

The signal sequence occupies residues 1–18 (MKLRLIAFVLILWTETLA). A nonhelical region region spans residues 19 to 1426 (DQSPGPGPEY…ACCCTFCKCP (1408 aa)). VWFA domains are found at residues 30–209 (DVVF…IKDV), 268–445 (DLIF…LKKI), 474–644 (DIYF…KNEI), 660–829 (DIMF…ESKL), 846–1023 (DIVF…QETL), 1037–1214 (DVIF…VREI), and 1226–1413 (DVVV…LGNI). Residues Asn-201, Asn-292, and Asn-614 are each glycosylated (N-linked (GlcNAc...) asparagine). Collagen-like domains are found at residues 1426–1478 (PGIP…GCPG), 1474–1524 (VGCP…DPGN), 1557–1614 (GQKG…GPEG), 1632–1689 (GSQG…GIPG), and 1706–1762 (GDPG…AGQP). The interval 1427-1760 (GIPGPHGTRG…GRRGPKGTAG (334 aa)) is triple-helical region. A disordered region spans residues 1435–1761 (RGLQASKGSS…RRGPKGTAGQ (327 aa)). The segment covering 1452–1464 (HRGEDGDPGRRGE) has biased composition (basic and acidic residues). Over residues 1537-1567 (DGEKGFPGDPGDPGKDSNIKGQKGEKGERGR) the composition is skewed to basic and acidic residues. The span at 1597 to 1609 (PSGQAGNPGPQGT) shows a compositional bias: polar residues. Low complexity predominate over residues 1610–1622 (QGPEGLQGSQGSS). The short motif at 1649 to 1651 (RGD) is the Cell attachment site element. Positions 1718 to 1727 (GIPGGPGPKG) are enriched in gly residues. A compositionally biased stretch (low complexity) spans 1740–1750 (RSGLQGSQGPP). The interval 1761–2640 (QPIYSPCELI…NSKQDGEDAR (880 aa)) is nonhelical region. VWFA domains lie at 1790-1970 (ELVF…KLRR) and 1996-2186 (DVAF…VKFL). Short sequence motifs (cell attachment site) lie at residues 2216 to 2218 (RGD) and 2259 to 2261 (RGD). Positions 2321-2516 (DVAFLIDASQ…PDLDYVIKFI (196 aa)) constitute a VWFA 10 domain. Asn-2541 carries N-linked (GlcNAc...) asparagine glycosylation. Residues 2617 to 2640 (DKEEPCSAETPAPVNSKQDGEDAR) form a disordered region.

This sequence belongs to the type VI collagen family. Trimers composed of three different chains: alpha-1(VI), alpha-2(VI), and alpha-3(VI) or alpha-4(VI) or alpha-5(VI) or alpha-6(VI). In terms of processing, prolines at the third position of the tripeptide repeating unit (G-X-Y) are hydroxylated in some or all of the chains. As to expression, in newborn, it is expressed in lung, heart, kidney, muscle, brain, intestine, skin, femur, sternum and calvaria. In adult, it is widely expressed and is detected in lung, heart, kidney, spleen, muscle, ovary, uterus, brain, skin, liver and sternum.

Its subcellular location is the secreted. The protein localises to the extracellular space. The protein resides in the extracellular matrix. In terms of biological role, collagen VI acts as a cell-binding protein. The chain is Collagen alpha-5(VI) chain (Col6a5) from Mus musculus (Mouse).